The following is a 201-amino-acid chain: 3-isopropylmalate dehydratase small subunit (201 aa).

It belongs to the LeuD family. LeuD type 1 subfamily. In terms of assembly, heterodimer of LeuC and LeuD.

The enzyme catalyses (2R,3S)-3-isopropylmalate = (2S)-2-isopropylmalate. It functions in the pathway amino-acid biosynthesis; L-leucine biosynthesis; L-leucine from 3-methyl-2-oxobutanoate: step 2/4. In terms of biological role, catalyzes the isomerization between 2-isopropylmalate and 3-isopropylmalate, via the formation of 2-isopropylmaleate. In Mesorhizobium japonicum (strain LMG 29417 / CECT 9101 / MAFF 303099) (Mesorhizobium loti (strain MAFF 303099)), this protein is 3-isopropylmalate dehydratase small subunit.